The sequence spans 422 residues: Replication factor C large subunit (422 aa).

Residue 63–70 (GPPGVGKT) coordinates ATP.

Belongs to the activator 1 small subunits family. RfcL subfamily. As to quaternary structure, heteromultimer composed of small subunits (RfcS) and large subunits (RfcL).

Functionally, part of the RFC clamp loader complex which loads the PCNA sliding clamp onto DNA. The polypeptide is Replication factor C large subunit (Pyrobaculum aerophilum (strain ATCC 51768 / DSM 7523 / JCM 9630 / CIP 104966 / NBRC 100827 / IM2)).